Reading from the N-terminus, the 339-residue chain is S-adenosylmethionine:tRNA ribosyltransferase-isomerase (339 aa).

This sequence belongs to the QueA family. As to quaternary structure, monomer.

It is found in the cytoplasm. The enzyme catalyses 7-aminomethyl-7-carbaguanosine(34) in tRNA + S-adenosyl-L-methionine = epoxyqueuosine(34) in tRNA + adenine + L-methionine + 2 H(+). It participates in tRNA modification; tRNA-queuosine biosynthesis. In terms of biological role, transfers and isomerizes the ribose moiety from AdoMet to the 7-aminomethyl group of 7-deazaguanine (preQ1-tRNA) to give epoxyqueuosine (oQ-tRNA). The protein is S-adenosylmethionine:tRNA ribosyltransferase-isomerase of Campylobacter fetus subsp. fetus (strain 82-40).